We begin with the raw amino-acid sequence, 601 residues long: Leucine zipper putative tumor suppressor 1 (601 aa).

The N-myristoyl glycine moiety is linked to residue Gly-2. The tract at residues 135–190 is disordered; it reads GAILHSSPESTNHQLHPMPPDKPKEQELKPGLCSGALSDSGRNSMSSLPTHSTTSS. The span at 153–162 shows a compositional bias: basic and acidic residues; sequence PPDKPKEQEL. The span at 174 to 190 shows a compositional bias: polar residues; sequence SGRNSMSSLPTHSTTSS. Residues 255–573 are a coiled coil; the sequence is PLSTDECTIQ…RLEKALQQLA (319 aa).

The protein belongs to the LZTS family. In terms of assembly, binds EEF1G, TLK2 and CDK1. Post-translationally, phosphorylated on serine residues. Hyperphosphorylated by the cAMP-dependent kinase PKA during cell-cycle progression. As to expression, highly expressed in brain, in particular in cortex, the CA2 region of the hippocampus, olfactory bulb, striatum and pons. Not detectable in the other tissues tested.

The protein localises to the cytoplasm. It is found in the cell membrane. Its subcellular location is the cell projection. It localises to the dendritic spine. The protein resides in the postsynaptic density. The protein localises to the synapse. Involved in the regulation of cell growth. May stabilize the active CDC2-cyclin B1 complex and thereby contribute to the regulation of the cell cycle and the prevention of uncontrolled cell proliferation. May act as tumor suppressor. This Rattus norvegicus (Rat) protein is Leucine zipper putative tumor suppressor 1 (Lzts1).